The sequence spans 333 residues: Na(+)-translocating ferredoxin:NAD(+) oxidoreductase complex subunit B (333 aa).

The interval 1–27 (MLNAILVPVGILGVFGLIFGIGLAIAA) is hydrophobic. The 4Fe-4S domain occupies 33–92 (YEDPRVPLVRAALPGANCGGCGLPGCDALAANIVGGSAAIDACPVGGASCAAAVAEIMGM). Residues C50, C53, C58, C75, C138, C142, C148, C152, C172, C175, C178, C182, C217, C220, C223, C227, C246, C249, C252, C256, C279, C282, C285, C289, C310, C313, C316, and C320 each coordinate [4Fe-4S] cluster. 6 4Fe-4S ferredoxin-type domains span residues 126-162 (REAMIASGGSKGCRYGCLGYGTCKAVCPFDAIVIGED), 163-192 (GLPKVDPEKCTSCGKCVEACPKSIMTLVPE), 207-237 (KIARLSCTTACIACGACVKACRFDAITVENN), 239-266 (AKIDYDKCRQCYECVDKCPMNCISGDVE), 270-299 (STAYIIEENCIACGLCAKNCPVNAITGEIK), and 301-330 (PPYVIDHDMCIGCGICFDKCRKSAIEMRPN).

It belongs to the 4Fe4S bacterial-type ferredoxin family. RnfB subfamily. In terms of assembly, the complex is composed of six subunits: RnfA, RnfB, RnfC, RnfD, RnfE and RnfG. Requires [4Fe-4S] cluster as cofactor.

The protein resides in the cell membrane. It carries out the reaction 2 reduced [2Fe-2S]-[ferredoxin] + Na(+)(in) + NAD(+) + H(+) = 2 oxidized [2Fe-2S]-[ferredoxin] + Na(+)(out) + NADH. Its function is as follows. Part of a membrane-bound complex that couples electron transfer with translocation of ions across the membrane. Couples electron transfer from reduced ferredoxin to NAD(+) with electrogenic movement of Na(+) out of the cell. Involved in caffeate respiration. The chain is Na(+)-translocating ferredoxin:NAD(+) oxidoreductase complex subunit B from Acetobacterium woodii (strain ATCC 29683 / DSM 1030 / JCM 2381 / KCTC 1655 / WB1).